The primary structure comprises 252 residues: uncharacterized protein (252 aa).

Composition is skewed to polar residues over residues R108–E122 and M136–S153. Positions R108–K252 are disordered. Positions T154–K172 are enriched in basic and acidic residues. Positions V201 to S226 are enriched in polar residues.

Its subcellular location is the cytoplasm. It localises to the mitochondrion. It is found in the nucleus. This is an uncharacterized protein from Schizosaccharomyces pombe (strain 972 / ATCC 24843) (Fission yeast).